The primary structure comprises 757 residues: Dolichyl-diphosphooligosaccharide--protein glycosyltransferase subunit stt-3 (757 aa).

The Cytoplasmic segment spans residues 1–13; it reads MTSTTAARTASSR. The helical transmembrane segment at 14–34 threads the bilayer; the sequence is VGATTLLTIVVLALAWFVGFA. Residues 35–121 lie on the Lumenal side of the membrane; it reads SRLFAIVRFE…VHIREVCVFL (87 aa). Positions 49–51 match the DXD motif 1 motif; the sequence is EFD. Mn(2+) is bound at residue Asp-51. A helical membrane pass occupies residues 122 to 140; the sequence is APTFSGLTAIATYLLTKEL. The Cytoplasmic portion of the chain corresponds to 141-142; the sequence is WS. Residues 143–160 traverse the membrane as a helical segment; it reads PGAGLFAACFIAISPGYT. At 161 to 171 the chain is on the lumenal side; sequence SRSVAGSYDNE. Residues Asp-169 and Glu-171 each contribute to the Mn(2+) site. The DXD motif 2 signature appears at 169 to 171; the sequence is DNE. Residues 172-191 form a helical membrane-spanning segment; sequence GIAIFALQFTYYLWVKSLKT. Over 192–193 the chain is Cytoplasmic; that stretch reads GS. The chain crosses the membrane as a helical span at residues 194-208; that stretch reads IMWASLCALSYFYMV. Residues 209-210 are Lumenal-facing; the sequence is SA. 2 helical membrane passes run 211 to 235 and 236 to 261; these read WGGYVFIINLIPLHALALIIMGRYS and SRLFVSYTSFYCLATILSMQVPFVGF. The Lumenal portion of the chain corresponds to 262–269; the sequence is QPVRTSEH. Residues 270–289 form a helical membrane-spanning segment; the sequence is MPAFGVFGLLQIVALMHYAR. The Cytoplasmic segment spans residues 290-299; the sequence is NRITRQQFMT. The chain crosses the membrane as a helical span at residues 300-320; the sequence is LFVGGLTILGALSVVVYFALV. Over 321–358 the chain is Lumenal; that stretch reads WGGYVAPFSGRFYSLWDTGYAKIHIPIIASVSEHQPTT. Positions 350 to 353 match the SVSE motif motif; that stretch reads SVSE. The helical transmembrane segment at 359 to 381 threads the bilayer; sequence WVSFFFDLHITAAVFPVGLWYCI. Residues 382 to 387 lie on the Cytoplasmic side of the membrane; sequence KKVNDE. Residues 388 to 404 traverse the membrane as a helical segment; sequence RVFIILYAVSAVYFAGV. Residues 405-408 are Lumenal-facing; that stretch reads MVRL. Residue Arg-407 coordinates dolichyl diphosphooligosaccharide. The chain crosses the membrane as a helical span at residues 409-430; that stretch reads MLTLTPAVCVLAGIGFSYTFEK. Over 431–469 the chain is Cytoplasmic; that stretch reads YLKDEETKERSSSQSGTTKDEKLYDKAAKNVKSRNANDG. Residues 470–495 form a helical membrane-spanning segment; sequence DESGVSSNVRTIISIILVIFLLMFVV. At 496–757 the chain is on the lumenal side; that stretch reads HATYVTSNAY…IRPAPTASKA (262 aa). Positions 547–549 are interacts with target acceptor peptide in protein substrate; sequence WWD. Positions 547-551 match the WWDYG motif motif; it reads WWDYG. Tyr-552 provides a ligand contact to dolichyl diphosphooligosaccharide. 2 N-linked (GlcNAc...) asparagine glycosylation sites follow: Asn-559 and Asn-566. Asn-570 is a glycosylation site (N-linked (GlcNAc...) (high mannose) asparagine). Asn-584 is a glycosylation site (N-linked (GlcNAc...) asparagine). Residues 614 to 621 carry the DK motif motif; sequence DINKFLWM. The disordered stretch occupies residues 721-757; that stretch reads RPTVKSEEATIPIKGKKATQGKNKKGVIRPAPTASKA. Positions 734 to 747 are enriched in basic residues; it reads KGKKATQGKNKKGV.

The protein belongs to the STT3 family. Component of the oligosaccharyltransferase (OST) complex. Mg(2+) serves as cofactor. Requires Mn(2+) as cofactor.

Its subcellular location is the endoplasmic reticulum membrane. The catalysed reaction is a di-trans,poly-cis-dolichyl diphosphooligosaccharide + L-asparaginyl-[protein] = N(4)-(oligosaccharide-(1-&gt;4)-N-acetyl-beta-D-glucosaminyl-(1-&gt;4)-N-acetyl-beta-D-glucosaminyl)-L-asparaginyl-[protein] + a di-trans,poly-cis-dolichyl diphosphate + H(+). Its pathway is protein modification; protein glycosylation. In terms of biological role, catalytic subunit of the oligosaccharyl transferase (OST) complex that catalyzes the initial transfer of a defined glycan (Glc(3)Man(9)GlcNAc(2) in eukaryotes) from the lipid carrier dolichol-pyrophosphate to an asparagine residue within an Asn-X-Ser/Thr consensus motif in nascent polypeptide chains, the first step in protein N-glycosylation. N-glycosylation occurs cotranslationally and the complex associates with the Sec61 complex at the channel-forming translocon complex that mediates protein translocation across the endoplasmic reticulum (ER). All subunits are required for a maximal enzyme activity. This subunit contains the active site and the acceptor peptide and donor lipid-linked oligosaccharide (LLO) binding pockets. In Caenorhabditis elegans, this protein is Dolichyl-diphosphooligosaccharide--protein glycosyltransferase subunit stt-3.